Here is a 540-residue protein sequence, read N- to C-terminus: Chaperonin GroEL (540 aa).

ATP contacts are provided by residues 29–32 (TLGP), 86–90 (DGTTT), glycine 413, 476–478 (NAA), and aspartate 492.

This sequence belongs to the chaperonin (HSP60) family. As to quaternary structure, forms a cylinder of 14 subunits composed of two heptameric rings stacked back-to-back. Interacts with the co-chaperonin GroES.

The protein localises to the cytoplasm. The enzyme catalyses ATP + H2O + a folded polypeptide = ADP + phosphate + an unfolded polypeptide.. Together with its co-chaperonin GroES, plays an essential role in assisting protein folding. The GroEL-GroES system forms a nano-cage that allows encapsulation of the non-native substrate proteins and provides a physical environment optimized to promote and accelerate protein folding. This chain is Chaperonin GroEL, found in Streptococcus gordonii.